A 382-amino-acid chain; its full sequence is Guanylate kinase 1 (382 aa).

A Guanylate kinase-like domain is found at 128 to 310 (QKPIVISGPS…CYENLKKLLS (183 aa)). 135 to 142 (GPSGVGKG) provides a ligand contact to ATP. Catalysis depends on residues Arg168, Arg261, and Arg272. Positions 295 and 296 each coordinate ATP.

This sequence belongs to the guanylate kinase family. Monomer.

Its subcellular location is the cytoplasm. The protein resides in the nucleus. It catalyses the reaction GMP + ATP = GDP + ADP. Essential for recycling GMP and indirectly, cGMP. The protein is Guanylate kinase 1 (GK1) of Oryza sativa subsp. japonica (Rice).